The chain runs to 130 residues: Large-conductance mechanosensitive channel (130 aa).

The next 2 helical transmembrane spans lie at 11 to 31 and 70 to 90; these read FALKGNVLDLAVAVVIGAAFG and GAFIQSIVDFIIIAFAIFIFV.

This sequence belongs to the MscL family. In terms of assembly, homopentamer.

The protein localises to the cell membrane. Functionally, channel that opens in response to stretch forces in the membrane lipid bilayer. May participate in the regulation of osmotic pressure changes within the cell. The sequence is that of Large-conductance mechanosensitive channel from Listeria welshimeri serovar 6b (strain ATCC 35897 / DSM 20650 / CCUG 15529 / CIP 8149 / NCTC 11857 / SLCC 5334 / V8).